The chain runs to 94 residues: Trp operon repressor homolog (94 aa).

The DNA-binding element occupies 58–81; that stretch reads QREIAEKYGVSIAQITRGSNALKG.

Belongs to the TrpR family. Homodimer.

It is found in the cytoplasm. Functionally, this protein is an aporepressor. When complexed with L-tryptophan it binds the operator region of the trp operon and prevents the initiation of transcription. The chain is Trp operon repressor homolog from Chlamydia trachomatis serovar L2 (strain ATCC VR-902B / DSM 19102 / 434/Bu).